The following is a 220-amino-acid chain: Large ribosomal subunit protein uL3 (220 aa).

The segment at Phe127 to Gly155 is disordered.

It belongs to the universal ribosomal protein uL3 family. In terms of assembly, part of the 50S ribosomal subunit. Forms a cluster with proteins L14 and L19.

One of the primary rRNA binding proteins, it binds directly near the 3'-end of the 23S rRNA, where it nucleates assembly of the 50S subunit. The chain is Large ribosomal subunit protein uL3 from Staphylococcus aureus (strain JH9).